The primary structure comprises 53 residues: Small ribosomal subunit protein uS14m (53 aa).

This sequence belongs to the universal ribosomal protein uS14 family.

The protein localises to the mitochondrion. This is Small ribosomal subunit protein uS14m (RPS14) from Bigelowiella natans (Pedinomonas minutissima).